We begin with the raw amino-acid sequence, 103 residues long: Phosphoribosyl-ATP pyrophosphatase (103 aa).

It belongs to the PRA-PH family.

It is found in the cytoplasm. It catalyses the reaction 1-(5-phospho-beta-D-ribosyl)-ATP + H2O = 1-(5-phospho-beta-D-ribosyl)-5'-AMP + diphosphate + H(+). The protein operates within amino-acid biosynthesis; L-histidine biosynthesis; L-histidine from 5-phospho-alpha-D-ribose 1-diphosphate: step 2/9. This Cereibacter sphaeroides (strain KD131 / KCTC 12085) (Rhodobacter sphaeroides) protein is Phosphoribosyl-ATP pyrophosphatase.